Reading from the N-terminus, the 221-residue chain is Tetraspanin-2 (221 aa).

Topologically, residues 1–13 (MGRFRGGLRCIKY) are cytoplasmic. A helical membrane pass occupies residues 14–34 (LLLGFNLLFWLAGSAVIAFGL). Topologically, residues 35–54 (WFRFGGAIKELSSEDKSPEY) are extracellular. The chain crosses the membrane as a helical span at residues 55–75 (FYVGLYVLVGAGALMMAVGFF). The Cytoplasmic segment spans residues 76–90 (GCCGAMRESQCVLGS). Residues 91–111 (FFTCLLVIFAAEVTTGVFAFI) form a helical membrane-spanning segment. Residues 112 to 188 (GKGVAIRHVQ…ETIISVKLQL (77 aa)) are Extracellular-facing. Asn139 carries an N-linked (GlcNAc...) asparagine glycan. The helical transmembrane segment at 189-209 (IGIVGIGIAGLTIFGMIFSMV) threads the bilayer. The Cytoplasmic portion of the chain corresponds to 210–221 (LCCAIRNSRDVI).

The protein belongs to the tetraspanin (TM4SF) family.

Its subcellular location is the membrane. Functionally, may play a role in signalling in oligodendrocytes in the early stages of their terminal differentiation into myelin-forming glia and may also function in stabilizing the mature sheath. The protein is Tetraspanin-2 (TSPAN2) of Homo sapiens (Human).